Reading from the N-terminus, the 763-residue chain is Amine oxidase [copper-containing] 3 (763 aa).

At 1–5 (MNQKT) the chain is on the cytoplasmic side. The chain crosses the membrane as a helical; Signal-anchor for type II membrane protein span at residues 6-26 (ILVLLILAVITIFALVCVLLV). Residues 27–763 (GRGGDGGEPS…AFSHGGFSHN (737 aa)) lie on the Extracellular side of the membrane. A glycan (O-linked (GalNAc...) serine) is linked at Ser-43. Residue Asn-137 is glycosylated (N-linked (GlcNAc...) asparagine). A disulfide bridge links Cys-198 with Cys-199. O-linked (GalNAc...) threonine glycosylation is present at Thr-212. Residues Asn-232 and Asn-294 are each glycosylated (N-linked (GlcNAc...) asparagine). Residue Asp-386 is the Proton acceptor of the active site. Cys-404 and Cys-430 are oxidised to a cystine. Tyr-471 (schiff-base intermediate with substrate; via topaquinone) is an active-site residue. Position 471 is a 2',4',5'-topaquinone (Tyr-471). Cu(2+)-binding residues include His-520 and His-522. Ca(2+) contacts are provided by Asp-529, Leu-530, Asp-531, and Glu-572. An N-linked (GlcNAc...) (complex) asparagine glycan is attached at Asn-592. An N-linked (GlcNAc...) asparagine glycan is attached at Asn-618. Glu-641, Phe-663, and Asn-665 together coordinate Ca(2+). N-linked (GlcNAc...) asparagine glycosylation occurs at Asn-666. Residues Glu-667, Asp-673, and Leu-674 each contribute to the Ca(2+) site. O-linked (GlcNAc) threonine glycosylation occurs at Thr-679. His-684 is a binding site for Cu(2+). Cys-734 and Cys-741 are joined by a disulfide.

The protein belongs to the copper/topaquinone oxidase family. In terms of assembly, homodimer; disulfide-linked. Can heterodimerize with isoform 2 leading to reduced surface expression. Probably forms heterodimers with AOC2. Cu(2+) is required as a cofactor. The cofactor is Ca(2+). Requires L-topaquinone as cofactor. Topaquinone (TPQ) is generated by copper-dependent autoxidation of a specific tyrosyl residue. In terms of processing, N- and O-glycosylated. In terms of tissue distribution, strongly expressed on the high endothelial venules of peripheral lymph nodes and on hepatic endothelia. Also highly expressed in appendix, lung and small intestine. Expressed also in adipose tissue, in bone marrow, colon, heart, kidney, ovary, pancreas, placenta, prostate, skeletal muscle, spleen and testis. Isoform 2 seems to be the predominant transcript in fetal kidneys, fetal cartilage and fetal tonsils. The highest relative expression of isoform 2 occurs in skeletal muscle, heart, pancreas, kidney, and lung.

Its subcellular location is the cell membrane. It carries out the reaction methylamine + O2 + H2O = formaldehyde + H2O2 + NH4(+). The catalysed reaction is benzylamine + O2 + H2O = benzaldehyde + H2O2 + NH4(+). The enzyme catalyses 2-phenylethylamine + O2 + H2O = 2-phenylacetaldehyde + H2O2 + NH4(+). In terms of biological role, catalyzes the oxidative deamination of primary amines to the corresponding aldehydes with the concomitant production of hydrogen peroxide and ammonia. Has a preference for the primary monoamines methylamine and benzylamine. Could also act on 2-phenylethylamine but much less efficiently. At endothelial cells surface can also function as a cell adhesion protein that participates in lymphocyte extravasation and recirculation by mediating the binding of lymphocytes to peripheral lymph node vascular endothelial cells in an L-selectin-independent fashion. Functionally, has no semicarbazide-sensitive amine oxidase (SSAO) activity. This Homo sapiens (Human) protein is Amine oxidase [copper-containing] 3.